Reading from the N-terminus, the 592-residue chain is Protein kinase C zeta type (592 aa).

One can recognise a PB1 domain in the interval Arg-15–Ser-98. Residues Ala-79–Gly-145 are interaction with SQSTM1. The Phorbol-ester/DAG-type zinc finger occupies Gly-130–Cys-180. In terms of domain architecture, Protein kinase spans Phe-252–Phe-518. ATP is bound by residues Ile-258 to Val-266 and Lys-281. Asp-376 functions as the Proton acceptor in the catalytic mechanism. Thr-410 is modified (phosphothreonine; by PDPK1 and PI3K). Residues Arg-519–Glu-590 enclose the AGC-kinase C-terminal domain. Thr-560 bears the Phosphothreonine mark. Position 591 is a phosphoserine (Ser-591).

Belongs to the protein kinase superfamily. AGC Ser/Thr protein kinase family. PKC subfamily. In terms of assembly, forms a ternary complex with SQSTM1 and KCNAB2. Forms another ternary complex with SQSTM1 and GABRR3. Forms a complex with SQSTM1 and MAP2K5. Interacts with PARD6A, PARD6B, PARD6G and SQSTM1. Part of a complex with PARD3, PARD6A or PARD6B or PARD6G and CDC42 or RAC1. Interacts with ADAP1/CENTA1. Forms a ternary complex composed of SQSTM1 and PAWR. Interacts directly with SQSTM1. Interacts with IKBKB. Interacts (via the protein kinase domain) with WWC1. Forms a tripartite complex with WWC1 and DDR1, but predominantly in the absence of collagen. Component of the Par polarity complex, composed of at least phosphorylated PRKCZ, PARD3 and TIAM1. Interacts with PDPK1 (via N-terminal region). Interacts with WDFY2 (via WD repeats 1-3). Interacts with VAMP2. Forms a complex with WDFY2 and VAMP2. Interacts with APPL1. Interacts with WWC1, WWC2 and WWC3. In terms of processing, CDH5 is required for its phosphorylation at Thr-410. Phosphorylated by protein kinase PDPK1; phosphorylation is inhibited by the apoptotic C-terminal cleavage product of PKN2. Phosphorylation at Thr-410 by PI3K activates the kinase. As to expression, expressed in brain, and to a lesser extent in lung, kidney and testis.

The protein localises to the cytoplasm. It is found in the endosome. The protein resides in the cell junction. Its subcellular location is the membrane. It catalyses the reaction L-seryl-[protein] + ATP = O-phospho-L-seryl-[protein] + ADP + H(+). The enzyme catalyses L-threonyl-[protein] + ATP = O-phospho-L-threonyl-[protein] + ADP + H(+). Atypical PKCs (PRKCI and PRKCZ) exhibit an elevated basal enzymatic activity (that may be due to the interaction with SMG1 or SQSTM1) and are not regulated by diacylglycerol, phosphatidylserine, phorbol esters or calcium ions. Two specific sites, Thr-410 (activation loop of the kinase domain) and Thr-560 (turn motif), need to be phosphorylated for its full activation. Phosphatidylinositol 3,4,5-trisphosphate might be a physiological activator. Isoform 2: Constitutively active. Calcium- and diacylglycerol-independent serine/threonine-protein kinase that functions in phosphatidylinositol 3-kinase (PI3K) pathway and mitogen-activated protein (MAP) kinase cascade, and is involved in NF-kappa-B activation, mitogenic signaling, cell proliferation, cell polarity, inflammatory response and maintenance of long-term potentiation (LTP). Upon lipopolysaccharide (LPS) treatment in macrophages, or following mitogenic stimuli, functions downstream of PI3K to activate MAP2K1/MEK1-MAPK1/ERK2 signaling cascade independently of RAF1 activation. Required for insulin-dependent activation of AKT3, but may function as an adapter rather than a direct activator. Upon insulin treatment may act as a downstream effector of PI3K and contribute to the activation of translocation of the glucose transporter SLC2A4/GLUT4 and subsequent glucose transport in adipocytes. In EGF-induced cells, binds and activates MAP2K5/MEK5-MAPK7/ERK5 independently of its kinase activity and can activate JUN promoter through MEF2C. Through binding with SQSTM1/p62, functions in interleukin-1 signaling and activation of NF-kappa-B with the specific adapters RIPK1 and TRAF6. Participates in TNF-dependent transactivation of NF-kappa-B by phosphorylating and activating IKBKB kinase, which in turn leads to the degradation of NF-kappa-B inhibitors. In migrating astrocytes, forms a cytoplasmic complex with PARD6A and is recruited by CDC42 to function in the establishment of cell polarity along with the microtubule motor and dynein. In association with FEZ1, stimulates neuronal differentiation in PC12 cells. In the inflammatory response, is required for the T-helper 2 (Th2) differentiation process, including interleukin production, efficient activation of JAK1 and the subsequent phosphorylation and nuclear translocation of STAT6. May be involved in development of allergic airway inflammation (asthma), a process dependent on Th2 immune response. In the NF-kappa-B-mediated inflammatory response, can relieve SETD6-dependent repression of NF-kappa-B target genes by phosphorylating the RELA subunit at 'Ser-311'. Phosphorylates VAMP2 in vitro. Phosphorylates and activates LRRK1, which phosphorylates RAB proteins involved in intracellular trafficking. In terms of biological role, involved in late synaptic long term potention phase in CA1 hippocampal cells and long term memory maintenance. The sequence is that of Protein kinase C zeta type (PRKCZ) from Homo sapiens (Human).